We begin with the raw amino-acid sequence, 209 residues long: Large ribosomal subunit protein uL3 (209 aa).

At Gln150 the chain carries N5-methylglutamine.

This sequence belongs to the universal ribosomal protein uL3 family. In terms of assembly, part of the 50S ribosomal subunit. Forms a cluster with proteins L14 and L19. Post-translationally, methylated by PrmB.

Functionally, one of the primary rRNA binding proteins, it binds directly near the 3'-end of the 23S rRNA, where it nucleates assembly of the 50S subunit. This is Large ribosomal subunit protein uL3 from Buchnera aphidicola subsp. Acyrthosiphon pisum (strain 5A).